Reading from the N-terminus, the 275-residue chain is Calcium-binding protein 4 (275 aa).

A compositionally biased stretch (polar residues) spans 1–12 (MTTEQARGQQGP). A disordered region spans residues 1–112 (MTTEQARGQQ…SLHDAAQRTY (112 aa)). Over residues 38–55 (TRKRSKKERGLRGSRKRT) the composition is skewed to basic residues. At Ser42 the chain carries Phosphoserine. EF-hand domains lie at 129 to 164 (EELD…LGYM), 183 to 200 (GRVD…KLRE), 206 to 241 (LGVR…LLGE), and 243 to 275 (LAGP…LSRH). Asp142, Asp144, Asp146, Tyr148, and Glu153 together coordinate Ca(2+). Ca(2+) is bound by residues Asp219, Asp221, Asp223, Arg225, Glu230, Asp256, Asn258, Asp260, Thr262, and Glu267.

In terms of assembly, interacts with CACNA1F and CACNA1D (via IQ domain) in a calcium independent manner. Interacts (via N-terminus) with UNC119. Phosphorylated. Phosphorylation levels change with the light conditions and regulate the activity. In terms of tissue distribution, expressed in retina and in the inner hair cells (IHC) of the cochlea.

The protein resides in the cytoplasm. It localises to the presynapse. Functionally, involved in normal synaptic function through regulation of Ca(2+) influx and neurotransmitter release in photoreceptor synaptic terminals and in auditory transmission. Modulator of CACNA1D and CACNA1F, suppressing the calcium-dependent inactivation and shifting the activation range to more hyperpolarized voltages. This is Calcium-binding protein 4 (CABP4) from Homo sapiens (Human).